The chain runs to 920 residues: WD repeat-containing protein 47 (920 aa).

Residues 10 to 42 (KEVEIIKLILDFLNSKKLHISMLALEKESGVIN) enclose the LisH domain. Residues 45-102 (FSDDMLFLRQLILDGQWDEVLQFIQPLECMEKFDKKRFRYIILKQKFLEALCVNNAMS) enclose the CTLH domain. Thr285 carries the post-translational modification Phosphothreonine. Phosphoserine occurs at positions 289, 292, 297, and 312. Residues 371 to 380 (YEESPERSDT) show a composition bias toward basic and acidic residues. The segment at 371-422 (YEESPERSDTPVEAQQPVSSEAMCQGSGLEKEPANGAQNPVPAKQEKNELRD) is disordered. Residue Ser423 is modified to Phosphoserine. Residues 501-594 (LNQQCSGSKN…RSKGEEDDKS (94 aa)) form a disordered region. Positions 506–523 (SGSKNNGSNNSSVTSFST) are enriched in low complexity. Positions 538–552 (NIHTSTPRNPGSTNH) are enriched in polar residues. Thr543 carries the post-translational modification Phosphothreonine. WD repeat units lie at residues 605–644 (EDTQAVRAVAFHPSGSLYAVGSNSKTLRVCAYPEKMDASA), 660–699 (HHKGSIYCVAWSPCGQLLATGSNDKYVKVLPFNAETCNAT), 707–749 (MHDG…GQGL), 754–792 (GHTGHILALYTWSGWMIASGSQDKTVRFWDLRVPSCVRV), 799–838 (GTGSAVASVAVDPSGRLLATGQEDSSCMLYDIRGGRMVQS), 841–880 (PHSSDVRSVRFSPGAHYLLTGSYDMKIKVTDLQGDLTKQL), and 887–919 (EHKDKVIQCRWHTQDLSFLSSSADRTVTLWTYS).

Interacts with MAP1S (via WD repeats). As to expression, enriched in the nervous system (at protein level).

It is found in the cytoplasm. It localises to the cytoskeleton. The sequence is that of WD repeat-containing protein 47 (Wdr47) from Mus musculus (Mouse).